The primary structure comprises 267 residues: MKKIATATIATAGFATIAIASGNQAHASEQDNYGYNPNDPTSYSYTYTIDAQGNYHYTWKGNWHPSQLNQDNGYYSYYYYNGYNNYNNYNNGYSYNNYSRYNNYSNNNQSYNYNNYNSYNTNSYRTGGLGASYSTSSNNVQVTTTMAPSSNGRSISSGYTSGRNLYTSGQCTYYVFDRVGGKIGSTWGNASNWANAAARAGYTVNNTPKAGAIMQTTQGAYGHVAYVESVNSNGSVRVSEMNYGYGPGVVTSRTISASQAAGYNFIH.

Residues 1–27 form the signal peptide; sequence MKKIATATIATAGFATIAIASGNQAHA. Repeat copies occupy residues 83-85, 86-88, 89-91, 95-97, 101-103, 104-106, and 113-115. A 7 X 3 AA repeats of Y-[NS]-N region spans residues 83 to 115; sequence YNNYNNYNNGYSYNNYSRYNNYSNNNQSYNYNN. A Peptidase C51 domain is found at 146 to 267; the sequence is MAPSSNGRSI…SQAAGYNFIH (122 aa).

It is found in the secreted. In terms of biological role, not known; immunogenic protein. The polypeptide is Staphylococcal secretory antigen ssaA2 (ssaA2) (Staphylococcus aureus (strain NCTC 8325 / PS 47)).